A 515-amino-acid chain; its full sequence is MGLEALVPLAMIVAIFLLLVDLMHRHQRWAARYPPGPLPLPGLGNLLHVDFQNTPYCFDQLRRRFGDVFSLQLAWTPVVVLNGLAAVREAMVTRGEDTADRPPAPIYQVLGFGPRSQGVILSRYGPAWREQRRFSVSTLRNLGLGKKSLEQWVTEEAACLCAAFADQAGRPFRPNGLLDKAVSNVIASLTCGRRFEYDDPRFLRLLDLAQEGLKEESGFLREVLNAVPVLPHIPALAGKVLRFQKAFLTQLDELLTEHRMTWDPAQPPRDLTEAFLAKKEKAKGSPESSFNDENLRIVVGNLFLAGMVTTSTTLAWGLLLMILHLDVQRGRRVSPGCPIVGTHVCPVRVQQEIDDVIGQVRRPEMGDQAHMPCTTAVIHEVQHFGDIVPLGVTHMTSRDIEVQGFRIPKGTTLITNLSSVLKDEAVWKKPFRFHPEHFLDAQGHFVKPEAFLPFSAGRRACLGEPLARMELFLFFTSLLQHFSFSVAAGQPRPSHSRVVSFLVTPSPYELCAVPR.

The Extracellular portion of the chain corresponds to 1–2 (MG). The helical transmembrane segment at 3 to 23 (LEALVPLAMIVAIFLLLVDLM) threads the bilayer. Residues 24 to 301 (HRHQRWAARY…DENLRIVVGN (278 aa)) are Cytoplasmic-facing. The chain crosses the membrane as a helical span at residues 302–322 (LFLAGMVTTSTTLAWGLLLMI). Topologically, residues 323 to 515 (LHLDVQRGRR…SPYELCAVPR (193 aa)) are extracellular. N-linked (GlcNAc...) asparagine glycosylation is present at N416. C461 contributes to the heme binding site.

This sequence belongs to the cytochrome P450 family. Heme is required as a cofactor. Expressed in brain cortex (at protein level).

It localises to the membrane. The protein localises to the cytoplasm. The protein resides in the mitochondrion. The catalysed reaction is an organic molecule + reduced [NADPH--hemoprotein reductase] + O2 = an alcohol + oxidized [NADPH--hemoprotein reductase] + H2O + H(+). Functionally, may be responsible for the metabolism of many drugs and environmental chemicals that it oxidizes. It may be involved in the metabolism of codeine to morphine. However, another study could not confirm it. This Homo sapiens (Human) protein is Cytochrome P450 2D7.